Here is a 1062-residue protein sequence, read N- to C-terminus: MVSSAQMGFNLQALLEQLSQDELSKFKYLITTFSLAHELQKIPHKEVDKADGKQLVEILTTHCDSYWVEMASLQVFEKMHRMDLSERAKDEVREAALKSFNKRKPLSLGITRKERPPLDVDEMLERFKTEAQAFTETKGNVICLGKEVFKGKKPDKDNRCRYILKTKFREMWKSWPGDSKEVQVMAERYKMLIPFSNPRVLPGPFSYTVVLYGPAGLGKTTLAQKLMLDWAEDNLIHKFKYAFYLSCRELSRLGPCSFAELVFRDWPELQDDIPHILAQARKILFVIDGFDELGAAPGALIEDICGDWEKKKPVPVLLGSLLNRVMLPKAALLVTTRPRALRDLRILAEEPIYIRVEGFLEEDRRAYFLRHFGDEDQAMRAFELMRSNAALFQLGSAPAVCWIVCTTLKLQMEKGEDPVPTCLTRTGLFLRFLCSRFPQGAQLRGALRTLSLLAAQGLWAQTSVLHREDLERLGVQESDLRLFLDGDILRQDRVSKGCYSFIHLSFQQFLTALFYTLEKEEEEDRDGHTWDIGDVQKLLSGVERLRNPDLIQAGYYSFGLANEKRAKELEATFGCRMSPDIKQELLRCDISCKGGHSTVTDLQELLGCLYESQEEELVKEVMAQFKEISLHLNAVDVVPSSFCVKHCRNLQKMSLQVIKENLPENVTASESDAEVERSQDDQHMLPFWTDLCSIFGSNKDLMGLAINDSFLSASLVRILCEQIASDTCHLQRVVFKNISPADAHRNLCLALRGHKTVTYLTLQGNDQDDMFPALCEVLRHPECNLRYLGLVSCSATTQQWADLSLALEVNQSLTCVNLSDNELLDEGAKLLYTTLRHPKCFLQRLSLENCHLTEANCKDLAAVLVVSRELTHLCLAKNPIGNTGVKFLCEGLRYPECKLQTLVLWNCDITSDGCCDLTKLLQEKSSLLCLDLGLNHIGVKGMKFLCEALRKPLCNLRCLWLWGCSIPPFSCEDLCSALSCNQSLVTLDLGQNPLGSSGVKMLFETLTCSSGTLRTLRLKIDDFNDELNKLLEEIEEKNPQLIIDTEKHHPWAERPSSHDFMI.

Residues 1-94 enclose the Pyrin domain; it reads MVSSAQMGFN…SERAKDEVRE (94 aa). Positions 207-526 constitute an NACHT domain; it reads YTVVLYGPAG…LEKEEEEDRD (320 aa). 213 to 220 contacts ATP; it reads GPAGLGKT. Ser-671 is subject to Phosphoserine. LRR repeat units follow at residues 812 to 832, 841 to 861, 869 to 889, 898 to 918, 926 to 946, 955 to 976, 983 to 1003, and 1010 to 1033; these read SLTC…KLLY, FLQR…KDLA, ELTH…KFLC, KLQT…CDLT, SLLC…KFLC, NLRC…DLCS, SLVT…KMLF, and SGTL…LLEE.

The protein belongs to the NLRP family. Interacts with CHUK. Interacts with IKBKB. Interacts with IKBKG. Interacts with MEFV. Interacts with PYCARD. Interacts (via pyrin domain) with PYDC2. Interacts with CARD8. Expressed at high levels in lung, placenta and thymus and at lower levels in ovary, intestine and brain. Highly abundant in oocytes and early embryos, however poorly expressed in somatic tissues such as brain, kidney, liver and spinal cord.

It is found in the cytoplasm. In terms of biological role, suppresses TNF- and CD40-induced NFKB1 activity at the level of the IKK complex, by inhibiting NFKBIA degradation induced by TNF. When associated with PYCARD, activates CASP1, leading to the secretion of mature pro-inflammatory cytokine IL1B. May be a component of the inflammasome, a protein complex which also includes PYCARD, CARD8 and CASP1 and whose function would be the activation of pro-inflammatory caspases. This is NACHT, LRR and PYD domains-containing protein 2 (NLRP2) from Homo sapiens (Human).